The following is a 92-amino-acid chain: Small ribosomal subunit protein uS19 (92 aa).

It belongs to the universal ribosomal protein uS19 family.

Protein S19 forms a complex with S13 that binds strongly to the 16S ribosomal RNA. The sequence is that of Small ribosomal subunit protein uS19 from Corynebacterium jeikeium (strain K411).